The following is a 1393-amino-acid chain: DNA-directed RNA polymerase subunit beta' (1393 aa).

Residues cysteine 70, cysteine 72, cysteine 85, and cysteine 88 each contribute to the Zn(2+) site. Mg(2+)-binding residues include aspartate 461, aspartate 463, and aspartate 465. 4 residues coordinate Zn(2+): cysteine 804, cysteine 877, cysteine 884, and cysteine 887.

Belongs to the RNA polymerase beta' chain family. As to quaternary structure, the RNAP catalytic core consists of 2 alpha, 1 beta, 1 beta' and 1 omega subunit. When a sigma factor is associated with the core the holoenzyme is formed, which can initiate transcription. The cofactor is Mg(2+). Zn(2+) is required as a cofactor.

The catalysed reaction is RNA(n) + a ribonucleoside 5'-triphosphate = RNA(n+1) + diphosphate. Functionally, DNA-dependent RNA polymerase catalyzes the transcription of DNA into RNA using the four ribonucleoside triphosphates as substrates. This chain is DNA-directed RNA polymerase subunit beta', found in Rhodospirillum rubrum (strain ATCC 11170 / ATH 1.1.1 / DSM 467 / LMG 4362 / NCIMB 8255 / S1).